Here is a 258-residue protein sequence, read N- to C-terminus: Indole-3-glycerol phosphate synthase (258 aa).

It belongs to the TrpC family.

The enzyme catalyses 1-(2-carboxyphenylamino)-1-deoxy-D-ribulose 5-phosphate + H(+) = (1S,2R)-1-C-(indol-3-yl)glycerol 3-phosphate + CO2 + H2O. Its pathway is amino-acid biosynthesis; L-tryptophan biosynthesis; L-tryptophan from chorismate: step 4/5. In Legionella pneumophila (strain Paris), this protein is Indole-3-glycerol phosphate synthase.